Reading from the N-terminus, the 245-residue chain is tRNA pseudouridine synthase A (245 aa).

The active-site Nucleophile is the aspartate 52. Residue tyrosine 111 coordinates substrate.

Belongs to the tRNA pseudouridine synthase TruA family. As to quaternary structure, homodimer.

It catalyses the reaction uridine(38/39/40) in tRNA = pseudouridine(38/39/40) in tRNA. Its function is as follows. Formation of pseudouridine at positions 38, 39 and 40 in the anticodon stem and loop of transfer RNAs. The protein is tRNA pseudouridine synthase A of Rhodopseudomonas palustris (strain HaA2).